The following is a 714-amino-acid chain: Calpain-1 catalytic subunit (714 aa).

The Calpain catalytic domain occupies 55–354; the sequence is LFRDEAFPPV…FTRLEICNLT (300 aa). Positions 109 and 114 each coordinate Ca(2+). Catalysis depends on residues Cys115, His272, and Asn296. Residues Asp318 and Asp323 each coordinate Ca(2+). At Thr354 the chain carries Phosphothreonine. A domain III region spans residues 355 to 526; sequence PDALKSQRVR…KKAGTQELDD (172 aa). The tract at residues 527 to 542 is linker; that stretch reads QVQAILPDEQVLSEEE. A domain IV region spans residues 543 to 713; the sequence is IDENFKALFR…LFKWLQLTMF (171 aa). EF-hand domains follow at residues 585–618, 615–650, and 680–714; these read FSLE…NRIR, NRIR…AGFK, and VRLE…TMFA. The Ca(2+) site is built by Asp598, Asp600, Asn602, Lys604, Glu609, Asp628, Asp630, Ser632, Ser634, and Glu639.

This sequence belongs to the peptidase C2 family. Forms a heterodimer with a small (regulatory) subunit CAPNS1. Ca(2+) is required as a cofactor. Post-translationally, undergoes calcium-induced successive autoproteolytic cleavages that generate a membrane-bound 78 kDa active form and an intracellular 75 kDa active form. Calpastatin reduces with high efficiency the transition from 78 kDa to 75 kDa calpain forms.

It localises to the cytoplasm. Its subcellular location is the cell membrane. It catalyses the reaction Broad endopeptidase specificity.. Activated by micromolar concentrations of calcium and inhibited by calpastatin. Its function is as follows. Calcium-regulated non-lysosomal thiol-protease which catalyzes limited proteolysis of substrates involved in cytoskeletal remodeling and signal transduction. Proteolytically cleaves CTBP1. Cleaves and activates caspase-7 (CASP7). In Sus scrofa (Pig), this protein is Calpain-1 catalytic subunit.